The chain runs to 674 residues: tRNA 5-methylaminomethyl-2-thiouridine biosynthesis bifunctional protein MnmC (674 aa).

Positions 1-246 (MFIMSSISHA…KREMIAGSLS (246 aa)) are tRNA (mnm(5)s(2)U34)-methyltransferase. The interval 272-674 (IGGGIASATL…RKGKALTQKV (403 aa)) is FAD-dependent cmnm(5)s(2)U34 oxidoreductase.

It in the N-terminal section; belongs to the methyltransferase superfamily. tRNA (mnm(5)s(2)U34)-methyltransferase family. The protein in the C-terminal section; belongs to the DAO family. FAD is required as a cofactor.

It localises to the cytoplasm. The enzyme catalyses 5-aminomethyl-2-thiouridine(34) in tRNA + S-adenosyl-L-methionine = 5-methylaminomethyl-2-thiouridine(34) in tRNA + S-adenosyl-L-homocysteine + H(+). In terms of biological role, catalyzes the last two steps in the biosynthesis of 5-methylaminomethyl-2-thiouridine (mnm(5)s(2)U) at the wobble position (U34) in tRNA. Catalyzes the FAD-dependent demodification of cmnm(5)s(2)U34 to nm(5)s(2)U34, followed by the transfer of a methyl group from S-adenosyl-L-methionine to nm(5)s(2)U34, to form mnm(5)s(2)U34. In Vibrio cholerae serotype O1 (strain ATCC 39315 / El Tor Inaba N16961), this protein is tRNA 5-methylaminomethyl-2-thiouridine biosynthesis bifunctional protein MnmC.